We begin with the raw amino-acid sequence, 248 residues long: 1-(5-phosphoribosyl)-5-[(5-phosphoribosylamino)methylideneamino] imidazole-4-carboxamide isomerase (248 aa).

The Proton acceptor role is filled by Asp-7. Catalysis depends on Asp-129, which acts as the Proton donor.

Belongs to the HisA/HisF family.

It is found in the cytoplasm. The catalysed reaction is 1-(5-phospho-beta-D-ribosyl)-5-[(5-phospho-beta-D-ribosylamino)methylideneamino]imidazole-4-carboxamide = 5-[(5-phospho-1-deoxy-D-ribulos-1-ylimino)methylamino]-1-(5-phospho-beta-D-ribosyl)imidazole-4-carboxamide. It functions in the pathway amino-acid biosynthesis; L-histidine biosynthesis; L-histidine from 5-phospho-alpha-D-ribose 1-diphosphate: step 4/9. The sequence is that of 1-(5-phosphoribosyl)-5-[(5-phosphoribosylamino)methylideneamino] imidazole-4-carboxamide isomerase from Aeromonas salmonicida (strain A449).